Consider the following 418-residue polypeptide: Pyruvate decarboxylase 1 (418 aa).

His-59 provides a ligand contact to substrate. The segment at 337–418 (DSWFNCQKLK…IFLINNGGYT (82 aa)) is thiamine pyrophosphate binding. Residues Asp-387, Asn-414, and Gly-416 each contribute to the Mg(2+) site.

It belongs to the TPP enzyme family. Homotetramer. The cofactor is a metal cation. Requires thiamine diphosphate as cofactor. Leaves.

The catalysed reaction is a 2-oxocarboxylate + H(+) = an aldehyde + CO2. This chain is Pyruvate decarboxylase 1 (PDC1), found in Nicotiana tabacum (Common tobacco).